The chain runs to 78 residues: Acyl carrier protein (78 aa).

A Carrier domain is found at 2–77 (SDTAERVKKI…DAVKFIDKAS (76 aa)). An O-(pantetheine 4'-phosphoryl)serine modification is found at Ser37.

This sequence belongs to the acyl carrier protein (ACP) family. In terms of processing, 4'-phosphopantetheine is transferred from CoA to a specific serine of apo-ACP by AcpS. This modification is essential for activity because fatty acids are bound in thioester linkage to the sulfhydryl of the prosthetic group.

Its subcellular location is the cytoplasm. Its pathway is lipid metabolism; fatty acid biosynthesis. Its function is as follows. Carrier of the growing fatty acid chain in fatty acid biosynthesis. The chain is Acyl carrier protein from Brucella abortus (strain S19).